The following is a 1218-amino-acid chain: Coatomer subunit alpha-2 (1218 aa).

8 WD repeats span residues 7–48 (TKSN…DRFD), 49–88 (EHEGPVRGVHFHNSQPLFVSGGDDYKIKVWNYKTHRCLFT), 91–132 (GHLD…SVLT), 133–172 (GHNHYVMCASFHPKEDLVVSASLDQTVRVWDIGALKKKSA), 202–241 (GHDRGVNWASFHPTLPLIVSGADDRQVKLWRMNETKAWEV), 246–285 (GHMNNVSSVMFHAKQDIIVSNSEDKSIRVWDATKRTGIQT), 288–326 (REHDRFWILAVHPEINLLAAGHDNGMIVFKLERERPAFA), and 363–404 (SLNQ…VGRS). The tract at residues 826–849 (NRGAVDEEEEDVEGDWGEGLDKFD) is disordered. Over residues 831–843 (DEEEEDVEGDWGE) the composition is skewed to acidic residues.

Oligomeric complex that consists of at least the alpha, beta, beta', gamma, delta, epsilon and zeta subunits.

It is found in the cytoplasm. The protein localises to the golgi apparatus membrane. Its subcellular location is the cytoplasmic vesicle. It localises to the COPI-coated vesicle membrane. Functionally, the coatomer is a cytosolic protein complex that binds to dilysine motifs and reversibly associates with Golgi non-clathrin-coated vesicles, which further mediate biosynthetic protein transport from the ER, via the Golgi up to the trans Golgi network. Coatomer complex is required for budding from Golgi membranes, and is essential for the retrograde Golgi-to-ER transport of dilysine-tagged proteins. The chain is Coatomer subunit alpha-2 from Arabidopsis thaliana (Mouse-ear cress).